Consider the following 279-residue polypeptide: Small ribosomal subunit protein uS2 (279 aa).

This sequence belongs to the universal ribosomal protein uS2 family. Component of the small ribosomal subunit. Mature ribosomes consist of a small (40S) and a large (60S) subunit. The 40S subunit contains about 33 different proteins and 1 molecule of RNA (18S). The 60S subunit contains about 49 different proteins and 3 molecules of RNA (28S, 5.8S and 5S). Interacts with ribosomal protein S21.

It is found in the cytoplasm. Its function is as follows. Required for the assembly and/or stability of the 40S ribosomal subunit. Required for the processing of the 20S rRNA-precursor to mature 18S rRNA in a late step of the maturation of 40S ribosomal subunits. This chain is Small ribosomal subunit protein uS2, found in Schistosoma japonicum (Blood fluke).